The chain runs to 318 residues: Death effector domain-containing protein (318 aa).

The 79-residue stretch at 25–103 folds into the DED domain; the sequence is SLHRMFDIVG…RHDLLPYVTL (79 aa). Disordered stretches follow at residues 128–147 and 160–191; these read PRAL…TVPP and QMCS…KEKQ.

Interacts with CASP8, CASP10, KRT8, KRT18, CASP3 and FADD. Homodimerizes and heterodimerizes with DEDD2. In terms of processing, exists predominantly in a mono- or diubiquitinated form. In terms of tissue distribution, widely expressed with highest levels in testis.

It localises to the cytoplasm. It is found in the nucleus. Its subcellular location is the nucleolus. Its function is as follows. A scaffold protein that directs CASP3 to certain substrates and facilitates their ordered degradation during apoptosis. May also play a role in mediating CASP3 cleavage of KRT18. Regulates degradation of intermediate filaments during apoptosis. May play a role in the general transcription machinery in the nucleus and might be an important regulator of the activity of GTF3C3. Inhibits DNA transcription in vitro. This Homo sapiens (Human) protein is Death effector domain-containing protein (DEDD).